A 291-amino-acid chain; its full sequence is MTTLAIDIGGTKLAAALIGADGQIRDRRELPTPASQTPQALRDALAALVAPLQAHAQQVAIASTGIIRDGSLLALNPHNLGGLLHFPLVKTLEQLSNLPTIAINDAQAAAWAEYQALEGDITDMVFITVSTGVGGGVVSGGKLLTGPSGLAGHIGHTLADPHGPVCGCGRTGCVEAIASGRGIAAAAQGELMGADARTIFTRAGQGDEQAQQLIHRSAHVLARLIADIKATTDCQCVVVGGSVGLAEGYLALVKTYLAQEPAAFHVDLLAAHYRHDAGLLGAALLAQGEKL.

Residues 5–12 (AIDIGGTK) and 132–139 (GVGGGVVS) each bind ATP. Residues H156, C166, C168, and C173 each coordinate Zn(2+).

The protein belongs to the ROK (NagC/XylR) family. NanK subfamily. In terms of assembly, homodimer.

The enzyme catalyses an N-acyl-D-mannosamine + ATP = an N-acyl-D-mannosamine 6-phosphate + ADP + H(+). It participates in amino-sugar metabolism; N-acetylneuraminate degradation; D-fructose 6-phosphate from N-acetylneuraminate: step 2/5. Functionally, catalyzes the phosphorylation of N-acetylmannosamine (ManNAc) to ManNAc-6-P. This chain is N-acetylmannosamine kinase, found in Shigella boydii serotype 18 (strain CDC 3083-94 / BS512).